Here is a 147-residue protein sequence, read N- to C-terminus: Small ribosomal subunit protein uS12 (147 aa).

This sequence belongs to the universal ribosomal protein uS12 family. As to quaternary structure, part of the 30S ribosomal subunit.

Functionally, with S4 and S5 plays an important role in translational accuracy. Located at the interface of the 30S and 50S subunits. The protein is Small ribosomal subunit protein uS12 of Sulfurisphaera tokodaii (strain DSM 16993 / JCM 10545 / NBRC 100140 / 7) (Sulfolobus tokodaii).